Here is a 183-residue protein sequence, read N- to C-terminus: Translation initiation factor IF-3 (183 aa).

Belongs to the IF-3 family. As to quaternary structure, monomer.

It localises to the cytoplasm. Its function is as follows. IF-3 binds to the 30S ribosomal subunit and shifts the equilibrium between 70S ribosomes and their 50S and 30S subunits in favor of the free subunits, thus enhancing the availability of 30S subunits on which protein synthesis initiation begins. In Pseudomonas aeruginosa (strain ATCC 15692 / DSM 22644 / CIP 104116 / JCM 14847 / LMG 12228 / 1C / PRS 101 / PAO1), this protein is Translation initiation factor IF-3.